The chain runs to 308 residues: Elongation factor Ts (308 aa).

An involved in Mg(2+) ion dislocation from EF-Tu region spans residues 80 to 83 (TDFV).

This sequence belongs to the EF-Ts family.

The protein resides in the cytoplasm. Its function is as follows. Associates with the EF-Tu.GDP complex and induces the exchange of GDP to GTP. It remains bound to the aminoacyl-tRNA.EF-Tu.GTP complex up to the GTP hydrolysis stage on the ribosome. The chain is Elongation factor Ts from Rhizobium etli (strain CIAT 652).